We begin with the raw amino-acid sequence, 196 residues long: Putative NADH dehydrogenase/NAD(P)H nitroreductase Reut_A1586 (196 aa).

Belongs to the nitroreductase family. HadB/RutE subfamily. The cofactor is FMN.

This chain is Putative NADH dehydrogenase/NAD(P)H nitroreductase Reut_A1586, found in Cupriavidus pinatubonensis (strain JMP 134 / LMG 1197) (Cupriavidus necator (strain JMP 134)).